An 86-amino-acid chain; its full sequence is Antifungal protein 2 (86 aa).

A signal peptide spans 1 to 21; the sequence is MHLSTALFSAIALLAATQVIG. Intrachain disulfides connect Cys43–Cys57, Cys45–Cys74, and Cys49–Cys83. The lipid-binding stretch occupies residues 44-54; it reads NCPNNCKHKKG. The Gamma-core signature appears at 72–83; that stretch reads GKCEWQGGQLNC.

It localises to the secreted. In terms of biological role, cysteine-rich antifungal protein highly effective against yeasts such as clinically relevant Candida species, including the multidrug-resistant pathogen Candida auris. Does not cause metabolic inactivity and apoptosis induction, but the fungal cell-killing activity is connected to its pore-forming ability in the cell membrane. NFAP2 has a low potential to trigger resistance in C.albicans in vitro, and the developed tolerance to NFAP2 is not associated with severe phenotypic changes compared with development of resistance to generic fluconazole. This Neosartorya fischeri (strain ATCC 1020 / DSM 3700 / CBS 544.65 / FGSC A1164 / JCM 1740 / NRRL 181 / WB 181) (Aspergillus fischerianus) protein is Antifungal protein 2.